The following is a 300-amino-acid chain: Glycine betaine/carnitine transport binding protein GbuC (300 aa).

An N-terminal signal peptide occupies residues 1-20 (MLKKLITTAVLAMLIFTLAA). Cys-21 is lipidated: N-palmitoyl cysteine. A lipid anchor (S-diacylglycerol cysteine) is attached at Cys-21.

The complex is composed of two ATP-binding proteins (GbuA), two transmembrane proteins (GbuB) and a solute-binding protein (GbuC).

The protein resides in the cell membrane. Its activity is regulated as follows. The complex is activated by an osmotic gradient or by low temperature. Its function is as follows. Part of the ABC transporter complex GbuABC involved in glycine betaine uptake. Involved, with BetL and OpuC, in osmoprotection and cryoprotection of Listeria. Can also uptake carnitine when carnitine is abundant in the growth medium. The sequence is that of Glycine betaine/carnitine transport binding protein GbuC (gbuC) from Listeria monocytogenes serotype 1/2a (strain 10403S).